We begin with the raw amino-acid sequence, 574 residues long: Septation ring formation regulator EzrA (574 aa).

At 1-7 (MSSGIVL) the chain is on the extracellular side. Residues 8–26 (LIVAIVLVVIIAYLIAIII) form a helical membrane-spanning segment. Over 27–574 (RKRNDSLITK…YEKTRETIRF (548 aa)) the chain is Cytoplasmic. 3 coiled-coil regions span residues 102 to 141 (NFIR…EEKN), 255 to 368 (KNIE…KDVL), and 409 to 495 (LKNI…EETA).

The protein belongs to the EzrA family.

It is found in the cell membrane. Its function is as follows. Negative regulator of FtsZ ring formation; modulates the frequency and position of FtsZ ring formation. Inhibits FtsZ ring formation at polar sites. Interacts either with FtsZ or with one of its binding partners to promote depolymerization. The sequence is that of Septation ring formation regulator EzrA from Streptococcus mutans serotype c (strain ATCC 700610 / UA159).